A 276-amino-acid chain; its full sequence is NADPH-dependent 7-cyano-7-deazaguanine reductase (276 aa).

80–82 lines the substrate pocket; sequence VES. Position 82–83 (82–83) interacts with NADPH; that stretch reads SK. Catalysis depends on C183, which acts as the Thioimide intermediate. The Proton donor role is filled by D190. A substrate-binding site is contributed by 222–223; it reads HE. 251 to 252 provides a ligand contact to NADPH; that stretch reads RG.

It belongs to the GTP cyclohydrolase I family. QueF type 2 subfamily. In terms of assembly, homodimer.

Its subcellular location is the cytoplasm. It catalyses the reaction 7-aminomethyl-7-carbaguanine + 2 NADP(+) = 7-cyano-7-deazaguanine + 2 NADPH + 3 H(+). Its pathway is tRNA modification; tRNA-queuosine biosynthesis. In terms of biological role, catalyzes the NADPH-dependent reduction of 7-cyano-7-deazaguanine (preQ0) to 7-aminomethyl-7-deazaguanine (preQ1). The chain is NADPH-dependent 7-cyano-7-deazaguanine reductase from Burkholderia cenocepacia (strain HI2424).